The primary structure comprises 504 residues: Protein nucleotidyltransferase YdiU (504 aa).

Positions 99, 101, 102, 122, 134, 135, 185, and 192 each coordinate ATP. Aspartate 261 serves as the catalytic Proton acceptor. Mg(2+) contacts are provided by asparagine 262 and aspartate 271. Position 271 (aspartate 271) interacts with ATP.

Belongs to the SELO family. The cofactor is Mg(2+). Mn(2+) is required as a cofactor.

The catalysed reaction is L-seryl-[protein] + ATP = 3-O-(5'-adenylyl)-L-seryl-[protein] + diphosphate. It catalyses the reaction L-threonyl-[protein] + ATP = 3-O-(5'-adenylyl)-L-threonyl-[protein] + diphosphate. It carries out the reaction L-tyrosyl-[protein] + ATP = O-(5'-adenylyl)-L-tyrosyl-[protein] + diphosphate. The enzyme catalyses L-histidyl-[protein] + UTP = N(tele)-(5'-uridylyl)-L-histidyl-[protein] + diphosphate. The catalysed reaction is L-seryl-[protein] + UTP = O-(5'-uridylyl)-L-seryl-[protein] + diphosphate. It catalyses the reaction L-tyrosyl-[protein] + UTP = O-(5'-uridylyl)-L-tyrosyl-[protein] + diphosphate. Nucleotidyltransferase involved in the post-translational modification of proteins. It can catalyze the addition of adenosine monophosphate (AMP) or uridine monophosphate (UMP) to a protein, resulting in modifications known as AMPylation and UMPylation. In Methylococcus capsulatus (strain ATCC 33009 / NCIMB 11132 / Bath), this protein is Protein nucleotidyltransferase YdiU.